A 126-amino-acid polypeptide reads, in one-letter code: SH2 domain-containing protein 1A (126 aa).

Positions 6-102 constitute an SH2 domain; the sequence is VYHGKISREM…GIVTPLQYPV (97 aa). Residues 67-92 are interaction with FYN SH3 domain; the sequence is ETAPGVHKRFFRKVKNLISAFQKPDQ. Lys89 bears the N6-acetyllysine mark. The interval 100 to 126 is disordered; the sequence is YPVEKSSARSPQAPTGRRDSDICLKAP. Positions 115-126 are enriched in basic and acidic residues; that stretch reads GRRDSDICLKAP. Ser119 is subject to Phosphoserine.

Interacts with CD84, CD244, LY9, SLAMF1 and FYN. Interacts with NTRK1, NTRK2 and NTRK3.

It is found in the cytoplasm. Cytoplasmic adapter regulating receptors of the signaling lymphocytic activation molecule (SLAM) family such as SLAMF1, CD244, LY9, CD84, SLAMF6 and SLAMF7. In SLAM signaling seems to cooperate with SH2D1B/EAT-2. Initially it has been proposed that association with SLAMF1 prevents SLAMF1 binding to inhibitory effectors including INPP5D/SHIP1 and PTPN11/SHP-2. However, by simultaneous interactions, recruits FYN which subsequently phosphorylates and activates SLAMF1. Positively regulates CD244/2B4- and CD84-mediated natural killer (NK) cell functions. Can also promote CD48-, SLAMF6 -, LY9-, and SLAMF7-mediated NK cell activation. In the context of NK cell-mediated cytotoxicity enhances conjugate formation with target cells. May also regulate the activity of the neurotrophin receptors NTRK1, NTRK2 and NTRK3. This chain is SH2 domain-containing protein 1A (Sh2d1a), found in Rattus norvegicus (Rat).